A 216-amino-acid chain; its full sequence is Flagellin B2 (216 aa).

Residues 1-12 (MKIKEFMSNKKG) constitute a propeptide that is removed on maturation. N-linked (GlcNAc...) asparagine glycosylation is found at Asn38, Asn72, Asn77, Asn113, Asn172, and Asn208.

The protein belongs to the archaeal flagellin family. N-linked glycans consist of the 779 Da trisaccharide beta-ManNAc(Thr)-(1-4)-beta-GlcNAc3NAcA-(1-3)-beta-GlcNAc.

The protein localises to the archaeal flagellum. Its function is as follows. Flagellin is the subunit protein which polymerizes to form the filaments of archaeal flagella. The sequence is that of Flagellin B2 (flaB2) from Methanococcus voltae.